A 62-amino-acid chain; its full sequence is Potassium channel toxin alpha-KTx 6.21 (62 aa).

The N-terminal stretch at 1-24 (MNAKLIYLLLVVTTMMLTFDTTQA) is a signal peptide. Intrachain disulfides connect C29–C50, C35–C55, C39–C57, and C45–C60. The residue at position 61 (V61) is a Valine amide.

The protein belongs to the short scorpion toxin superfamily. Potassium channel inhibitor family. Alpha-KTx 06 subfamily. C-terminal amidation is important for activity. There is a 50-70-fold decrease in ability to inhibit Kv1.2/KCNA2 when the toxin is not amidated. This decrease may be explained by a 23-fold slower association rate (k(on)) together with a 2-fold faster dissociation rate (k(off)). Expressed by the venom gland.

The protein resides in the secreted. Reversible blocker of voltage-gated potassium channels with fast binding and unbinding kinetics. Has highest activity on human voltage-gated potassium channel Kv1.2/KCNA2 channels (IC(50)=0.11-0.16 nM), whereas its affinity for other channels tested was in the nanomolar range (hKv1.1/KCNA1, IC(50)=253 nM; hKv1.3/KCNA3, IC(50)=91 nM; and hKCa3.1/KCNN4, IC(50)=70 nM). The chain is Potassium channel toxin alpha-KTx 6.21 from Urodacus yaschenkoi (Inland robust scorpion).